The primary structure comprises 270 residues: Bis(5'-nucleosyl)-tetraphosphatase, symmetrical (270 aa).

The protein belongs to the Ap4A hydrolase family.

The enzyme catalyses P(1),P(4)-bis(5'-adenosyl) tetraphosphate + H2O = 2 ADP + 2 H(+). Functionally, hydrolyzes diadenosine 5',5'''-P1,P4-tetraphosphate to yield ADP. The polypeptide is Bis(5'-nucleosyl)-tetraphosphatase, symmetrical (Haemophilus ducreyi (strain 35000HP / ATCC 700724)).